A 542-amino-acid chain; its full sequence is CTP synthase (542 aa).

Residues 1 to 265 (MARYVFITGG…DSEVLSAFGI (265 aa)) are amidoligase domain. S13 is a binding site for CTP. Residue S13 participates in UTP binding. Residue 14–19 (SLGKGI) participates in ATP binding. Residue Y54 coordinates L-glutamine. D71 is a binding site for ATP. The Mg(2+) site is built by D71 and E139. CTP contacts are provided by residues 146 to 148 (DIE), 186 to 191 (KTKPTQ), and K222. UTP is bound by residues 186-191 (KTKPTQ) and K222. One can recognise a Glutamine amidotransferase type-1 domain in the interval 291 to 541 (TIAVVGKYTG…IEAAIEQSRL (251 aa)). G353 contributes to the L-glutamine binding site. The Nucleophile; for glutamine hydrolysis role is filled by C380. Residues 381-384 (FGMQ), E404, and R469 each bind L-glutamine. Catalysis depends on residues H514 and E516.

Belongs to the CTP synthase family. Homotetramer.

The enzyme catalyses UTP + L-glutamine + ATP + H2O = CTP + L-glutamate + ADP + phosphate + 2 H(+). It carries out the reaction L-glutamine + H2O = L-glutamate + NH4(+). It catalyses the reaction UTP + NH4(+) + ATP = CTP + ADP + phosphate + 2 H(+). It functions in the pathway pyrimidine metabolism; CTP biosynthesis via de novo pathway; CTP from UDP: step 2/2. Its activity is regulated as follows. Allosterically activated by GTP, when glutamine is the substrate; GTP has no effect on the reaction when ammonia is the substrate. The allosteric effector GTP functions by stabilizing the protein conformation that binds the tetrahedral intermediate(s) formed during glutamine hydrolysis. Inhibited by the product CTP, via allosteric rather than competitive inhibition. In terms of biological role, catalyzes the ATP-dependent amination of UTP to CTP with either L-glutamine or ammonia as the source of nitrogen. Regulates intracellular CTP levels through interactions with the four ribonucleotide triphosphates. The polypeptide is CTP synthase (Brucella melitensis biotype 2 (strain ATCC 23457)).